The primary structure comprises 370 residues: MRLFSVVLAVFTLLLPSQAFAQRIKDVASIQGVRSNQLVGYGLVVGLPGTGEQSPFTEQSFRTMLRNFGISLDANTKPKIRNVAAVAVHADLPAFAKPGQTIDITVSSVGEAASLQGGTLLQTFLRGVDGKVYAVAQGSLVVSGFGAQGGDGSRIVVNTPTVGRIPNGAMVEQSVPTGFANGDTLTLNLHYPDFSTAKSLADTINERLGAQPENGYVIAKPIDAASVRVSAPRDVGQRVGFLATLENFEFTPADAPARVVINSRTGTIVIGSDVRLLPAAITHGGLTVTISENQQVTQPNAFADGQTAITTQSIVDVDLADSRMFKFEPGVTLDQLVRAVNEVGAAPGDLMAILEALRHAGALRGELVII.

Positions 1–21 are cleaved as a signal peptide; that stretch reads MRLFSVVLAVFTLLLPSQAFA.

This sequence belongs to the FlgI family. The basal body constitutes a major portion of the flagellar organelle and consists of four rings (L,P,S, and M) mounted on a central rod.

The protein resides in the periplasm. Its subcellular location is the bacterial flagellum basal body. Functionally, assembles around the rod to form the L-ring and probably protects the motor/basal body from shearing forces during rotation. This Alteromonas mediterranea (strain DSM 17117 / CIP 110805 / LMG 28347 / Deep ecotype) protein is Flagellar P-ring protein.